Reading from the N-terminus, the 103-residue chain is Small ribosomal subunit protein uS10 (103 aa).

This sequence belongs to the universal ribosomal protein uS10 family. In terms of assembly, part of the 30S ribosomal subunit.

In terms of biological role, involved in the binding of tRNA to the ribosomes. The polypeptide is Small ribosomal subunit protein uS10 (Vibrio cholerae serotype O1 (strain ATCC 39541 / Classical Ogawa 395 / O395)).